Reading from the N-terminus, the 357-residue chain is Probable leucine aminopeptidase TRV_02148.1 (357 aa).

A signal peptide spans 1–15 (MKVLAALALSALAMA). N-linked (GlcNAc...) asparagine glycosylation occurs at Asn-76. Residues His-167 and Asp-185 each coordinate Zn(2+). The disordered stretch occupies residues 169 to 188 (DSINGKNPQGEAPGADDNGS). N-linked (GlcNAc...) asparagine glycosylation is present at Asn-186. The Zn(2+) site is built by Glu-224 and Asp-251. The N-linked (GlcNAc...) asparagine glycan is linked to Asn-269. Cys-291 and Cys-295 form a disulfide bridge. Residue His-324 participates in Zn(2+) binding.

This sequence belongs to the peptidase M28 family. M28E subfamily. Monomer. It depends on Zn(2+) as a cofactor.

Its subcellular location is the secreted. Its function is as follows. Probable extracellular aminopeptidase which contributes to pathogenicity. In Trichophyton verrucosum (strain HKI 0517), this protein is Probable leucine aminopeptidase TRV_02148.1.